We begin with the raw amino-acid sequence, 225 residues long: MQKKAVILYSGGLDSTTCLAIAKKQGFAPYALSFSYGQRHQQELEVAKLNARPMGAVDHLLVEFDLRKMGGSALTSDIEVPKEGVGEEIPVTYVPARNTIFLSFALGWAETLDCFDIFIGVNALDYSGYPDCRPEFISAYETMANLATKAGVEGKRLQIHTPLISLTKAEIIQKGISLGVDYSKTHSCYDPAEDGAACGRCDSCRLRLKGFAEAGVTDPVRYQKL.

ATP is bound at residue 9 to 19 (YSGGLDSTTCL). Cysteine 188, cysteine 198, cysteine 201, and cysteine 204 together coordinate Zn(2+).

It belongs to the QueC family. Zn(2+) is required as a cofactor.

The enzyme catalyses 7-carboxy-7-deazaguanine + NH4(+) + ATP = 7-cyano-7-deazaguanine + ADP + phosphate + H2O + H(+). Its pathway is purine metabolism; 7-cyano-7-deazaguanine biosynthesis. In terms of biological role, catalyzes the ATP-dependent conversion of 7-carboxy-7-deazaguanine (CDG) to 7-cyano-7-deazaguanine (preQ(0)). The sequence is that of 7-cyano-7-deazaguanine synthase from Geobacter sp. (strain M21).